Consider the following 263-residue polypeptide: Shikimate dehydrogenase (NADP(+)) (263 aa).

Shikimate is bound by residues 14-16 and Thr-60; that span reads SLS. Lys-64 serves as the catalytic Proton acceptor. Residues Asn-85 and Asp-100 each coordinate shikimate. NADP(+) is bound by residues 123–127, 146–151, and Leu-205; these read GAGGA and NRTPQR. A shikimate-binding site is contributed by Tyr-207. Gly-228 is an NADP(+) binding site.

This sequence belongs to the shikimate dehydrogenase family. As to quaternary structure, homodimer.

The catalysed reaction is shikimate + NADP(+) = 3-dehydroshikimate + NADPH + H(+). Its pathway is metabolic intermediate biosynthesis; chorismate biosynthesis; chorismate from D-erythrose 4-phosphate and phosphoenolpyruvate: step 4/7. Functionally, involved in the biosynthesis of the chorismate, which leads to the biosynthesis of aromatic amino acids. Catalyzes the reversible NADPH linked reduction of 3-dehydroshikimate (DHSA) to yield shikimate (SA). This is Shikimate dehydrogenase (NADP(+)) from Thermus thermophilus (strain ATCC BAA-163 / DSM 7039 / HB27).